Here is a 289-residue protein sequence, read N- to C-terminus: Shikimate kinase (289 aa).

84–94 provides a ligand contact to ATP; it reads PVASGLSSSSA.

This sequence belongs to the GHMP kinase family. Archaeal shikimate kinase subfamily.

It localises to the cytoplasm. It catalyses the reaction shikimate + ATP = 3-phosphoshikimate + ADP + H(+). The protein operates within metabolic intermediate biosynthesis; chorismate biosynthesis; chorismate from D-erythrose 4-phosphate and phosphoenolpyruvate: step 5/7. This is Shikimate kinase (aroK) from Methanothermobacter thermautotrophicus (strain ATCC 29096 / DSM 1053 / JCM 10044 / NBRC 100330 / Delta H) (Methanobacterium thermoautotrophicum).